Reading from the N-terminus, the 344-residue chain is Arginine N-succinyltransferase (344 aa).

Leu125 provides a ligand contact to succinyl-CoA. The active-site Proton donor is His229.

This sequence belongs to the arginine N-succinyltransferase family.

The enzyme catalyses succinyl-CoA + L-arginine = N(2)-succinyl-L-arginine + CoA + H(+). Its pathway is amino-acid degradation; L-arginine degradation via AST pathway; L-glutamate and succinate from L-arginine: step 1/5. Functionally, catalyzes the transfer of succinyl-CoA to arginine to produce N(2)-succinylarginine. The sequence is that of Arginine N-succinyltransferase from Shigella dysenteriae serotype 1 (strain Sd197).